The chain runs to 1216 residues: 1-phosphatidylinositol 4,5-bisphosphate phosphodiesterase beta-1 (1216 aa).

A lipid anchor (S-palmitoyl cysteine) is attached at Cys-17. A Phosphoserine modification is found at Ser-236. A PI-PLC X-box domain is found at 316-467 (EDMSQPLSHY…LMYKILVKNK (152 aa)). Residues His-331 and His-378 contribute to the active site. Phosphoserine is present on Ser-417. A disordered region spans residues 469-534 (KSHKSSEGSG…MDEGTAGSEA (66 aa)). A compositionally biased stretch (basic and acidic residues) spans 472–483 (KSSEGSGKKKLS). Positions 491–501 (SDSSSVFEPSS) are enriched in low complexity. Residues 507-518 (ADTESDDDDDDD) are compositionally biased toward acidic residues. Thr-509 is subject to Phosphothreonine. Residues Ser-511 and Ser-582 each carry the phosphoserine modification. A PI-PLC Y-box domain is found at 540–656 (MSNLVNYIQP…GYRLKPEFMR (117 aa)). The 131-residue stretch at 656–786 (RRPDKHFDPF…RNERNQPLTL (131 aa)) folds into the C2 domain. Disordered regions lie at residues 834 to 891 (DEEE…VKAP), 967 to 989 (EKSA…GSSA), 1072 to 1095 (MDKK…EEEK), and 1173 to 1216 (ISED…DTPL). Residues 846-868 (ETSSEAPSETRTTPAENGVNHTA) show a composition bias toward polar residues. At Ser-887 the chain carries Phosphoserine; by PKC. Residues 967 to 979 (EKSAKKDSKKKSE) show a composition bias toward basic and acidic residues. Phosphoserine is present on residues Ser-978 and Ser-987. Basic and acidic residues predominate over residues 1075-1095 (KRQEKITEAKSKDKSQMEEEK). 3 positions are modified to phosphoserine: Ser-1197, Ser-1199, and Ser-1200. Residues 1205-1216 (RENPGREFDTPL) are compositionally biased toward basic and acidic residues.

In terms of assembly, interacts with DGKQ. Ca(2+) is required as a cofactor. In terms of processing, palmitoylated. Palmitoylation at Cys-17 by ZDHHC21 regulates the signaling activity of PLCB1 and the function of the endothelial barrier. Palmitoylation by ZDHHC21 is stimulated by inflammation.

The protein resides in the nucleus membrane. It localises to the cytoplasm. The enzyme catalyses a 1,2-diacyl-sn-glycero-3-phospho-(1D-myo-inositol-4,5-bisphosphate) + H2O = 1D-myo-inositol 1,4,5-trisphosphate + a 1,2-diacyl-sn-glycerol + H(+). The catalysed reaction is a 1,2-diacyl-sn-glycero-3-phospho-(1D-myo-inositol) + H2O = 1D-myo-inositol 1-phosphate + a 1,2-diacyl-sn-glycerol + H(+). Functionally, catalyzes the hydrolysis of 1-phosphatidylinositol 4,5-bisphosphate into diacylglycerol (DAG) and inositol 1,4,5-trisphosphate (IP3) and mediates intracellular signaling downstream of G protein-coupled receptors. Regulates the function of the endothelial barrier. This Mus musculus (Mouse) protein is 1-phosphatidylinositol 4,5-bisphosphate phosphodiesterase beta-1.